We begin with the raw amino-acid sequence, 905 residues long: Alanine--tRNA ligase (905 aa).

Residues H595, H599, C696, and H700 each coordinate Zn(2+).

The protein belongs to the class-II aminoacyl-tRNA synthetase family. The cofactor is Zn(2+).

It localises to the cytoplasm. It carries out the reaction tRNA(Ala) + L-alanine + ATP = L-alanyl-tRNA(Ala) + AMP + diphosphate. Functionally, catalyzes the attachment of alanine to tRNA(Ala) in a two-step reaction: alanine is first activated by ATP to form Ala-AMP and then transferred to the acceptor end of tRNA(Ala). Also edits incorrectly charged Ser-tRNA(Ala) and Gly-tRNA(Ala) via its editing domain. The polypeptide is Alanine--tRNA ligase (Anaeromyxobacter dehalogenans (strain 2CP-C)).